The sequence spans 144 residues: Transcriptional regulator SlyA (144 aa).

The HTH marR-type domain maps to 2–135; it reads ESTLGSDLAR…LVGLIGKLEQ (134 aa). Positions 49–72 form a DNA-binding region, H-T-H motif; it reads QIQLAKAIGIEQPSLVRTLDQLEE.

Belongs to the SlyA family. As to quaternary structure, homodimer.

In terms of biological role, transcription regulator that can specifically activate or repress expression of target genes. This chain is Transcriptional regulator SlyA, found in Serratia proteamaculans (strain 568).